The chain runs to 319 residues: Ribosomal RNA large subunit methyltransferase F (319 aa).

The interval 1–25 (MAPFFSAMTSKKQSQGLPKGPHPDN) is disordered. Positions 7-16 (AMTSKKQSQG) are enriched in polar residues.

Belongs to the methyltransferase superfamily. METTL16/RlmF family.

The protein localises to the cytoplasm. It carries out the reaction adenosine(1618) in 23S rRNA + S-adenosyl-L-methionine = N(6)-methyladenosine(1618) in 23S rRNA + S-adenosyl-L-homocysteine + H(+). Functionally, specifically methylates the adenine in position 1618 of 23S rRNA. The protein is Ribosomal RNA large subunit methyltransferase F of Shewanella amazonensis (strain ATCC BAA-1098 / SB2B).